We begin with the raw amino-acid sequence, 611 residues long: Acetylcholinesterase (611 aa).

Positions 1–31 (MRPPWCPLYTPSLAAPILLLLLFLLGGGAEA) are cleaved as a signal peptide. An intrachain disulfide couples C97 to C124. S231 acts as the Acyl-ester intermediate in catalysis. A disulfide bridge connects residues C285 and C300. An N-linked (GlcNAc...) asparagine glycan is attached at N293. The Charge relay system role is filled by E362. N378 carries N-linked (GlcNAc...) asparagine glycosylation. A disulfide bridge connects residues C437 and C557. The active-site Charge relay system is the H475. The N-linked (GlcNAc...) asparagine glycan is linked to N492.

The protein belongs to the type-B carboxylesterase/lipase family. In terms of assembly, interacts with PRIMA1. The interaction with PRIMA1 is required to anchor it to the basal lamina of cells and organize into tetramers. Isoform H generates GPI-anchored dimers; disulfide linked. Isoform T generates multiple structures, ranging from monomers and dimers to collagen-tailed and hydrophobic-tailed forms, in which catalytic tetramers are associated with anchoring proteins that attach them to the basal lamina or to cell membranes. In the collagen-tailed forms, isoform T subunits are associated with a specific collagen, COLQ, which triggers the formation of isoform T tetramers, from monomers and dimers.

Its subcellular location is the synapse. It is found in the secreted. It localises to the cell membrane. The enzyme catalyses acetylcholine + H2O = choline + acetate + H(+). Terminates signal transduction at the neuromuscular junction by rapid hydrolysis of the acetylcholine released into the synaptic cleft. This chain is Acetylcholinesterase (ACHE), found in Felis catus (Cat).